The following is a 246-amino-acid chain: Ribonuclease 3 (246 aa).

Residues 10–143 form the RNase III domain; the sequence is LERLEQALDY…LLGAIYLDGG (134 aa). Glutamate 56 lines the Mg(2+) pocket. The active site involves aspartate 60. The Mg(2+) site is built by asparagine 129 and glutamate 132. The active site involves glutamate 132. In terms of domain architecture, DRBM spans 170–239; that stretch reads DYKTLLQEYL…AQQALELLIE (70 aa).

It belongs to the ribonuclease III family. As to quaternary structure, homodimer. Requires Mg(2+) as cofactor.

Its subcellular location is the cytoplasm. It catalyses the reaction Endonucleolytic cleavage to 5'-phosphomonoester.. Its function is as follows. Digests double-stranded RNA. Involved in the processing of primary rRNA transcript to yield the immediate precursors to the large and small rRNAs (23S and 16S). Processes some mRNAs, and tRNAs when they are encoded in the rRNA operon. Processes pre-crRNA and tracrRNA of type II CRISPR loci if present in the organism. The polypeptide is Ribonuclease 3 (Magnetococcus marinus (strain ATCC BAA-1437 / JCM 17883 / MC-1)).